The sequence spans 243 residues: MENLNLNKHISGQFNAELENIRTQVLSMGGLVEQQLTDAITAMHNQDSELATRVIEGDSKVNLMEVTIDEACVRIIAKRQPTASDLRLVMAIIKTISELERIGDVADKICRTALEKFSHQHQPLLVSLESLGRHTVQMLHDVLDAFARMDLDEAIRIYREDKKVDKEYEGIVRQLMTHMMEDSRTIPSVLTALFCARSIERIGDRCQNICEFIFYFVKGQDVRHMGGDALEKLLIASDXKKAK.

The protein belongs to the PhoU family. Homodimer.

Its subcellular location is the cytoplasm. Functionally, part of the phosphate (Pho) regulon, which plays a key role in phosphate homeostasis. Encoded together with proteins of the phosphate-specific transport (Pst) system in the polycistronic pstSCAB-phoU operon. PhoU is essential for the repression of the Pho regulon at high phosphate conditions. In this role, it may bind, possibly as a chaperone, to PhoR, PhoB or a PhoR-PhoB complex to promote dephosphorylation of phospho-PhoB, or inhibit formation of the PhoR-PhoB transitory complex. This Serratia marcescens protein is Phosphate-specific transport system accessory protein PhoU.